A 103-amino-acid chain; its full sequence is Large ribosomal subunit protein bL21 (103 aa).

The protein belongs to the bacterial ribosomal protein bL21 family. As to quaternary structure, part of the 50S ribosomal subunit. Contacts protein L20.

This protein binds to 23S rRNA in the presence of protein L20. The polypeptide is Large ribosomal subunit protein bL21 (Acidovorax sp. (strain JS42)).